Reading from the N-terminus, the 151-residue chain is 3-hydroxyacyl-[acyl-carrier-protein] dehydratase FabZ (151 aa).

The active site involves H54.

This sequence belongs to the thioester dehydratase family. FabZ subfamily.

Its subcellular location is the cytoplasm. It catalyses the reaction a (3R)-hydroxyacyl-[ACP] = a (2E)-enoyl-[ACP] + H2O. Functionally, involved in unsaturated fatty acids biosynthesis. Catalyzes the dehydration of short chain beta-hydroxyacyl-ACPs and long chain saturated and unsaturated beta-hydroxyacyl-ACPs. In Pectobacterium atrosepticum (strain SCRI 1043 / ATCC BAA-672) (Erwinia carotovora subsp. atroseptica), this protein is 3-hydroxyacyl-[acyl-carrier-protein] dehydratase FabZ.